A 209-amino-acid polypeptide reads, in one-letter code: Uracil phosphoribosyltransferase (209 aa).

5-phospho-alpha-D-ribose 1-diphosphate-binding positions include arginine 79, arginine 104, and 131 to 139 (DPMLATGVS). Uracil contacts are provided by residues isoleucine 194 and 199–201 (GDA). Aspartate 200 provides a ligand contact to 5-phospho-alpha-D-ribose 1-diphosphate.

Belongs to the UPRTase family. Mg(2+) is required as a cofactor.

It carries out the reaction UMP + diphosphate = 5-phospho-alpha-D-ribose 1-diphosphate + uracil. The protein operates within pyrimidine metabolism; UMP biosynthesis via salvage pathway; UMP from uracil: step 1/1. With respect to regulation, allosterically activated by GTP. Functionally, catalyzes the conversion of uracil and 5-phospho-alpha-D-ribose 1-diphosphate (PRPP) to UMP and diphosphate. In Thermotoga petrophila (strain ATCC BAA-488 / DSM 13995 / JCM 10881 / RKU-1), this protein is Uracil phosphoribosyltransferase.